The following is a 431-amino-acid chain: Adenylosuccinate synthetase (431 aa).

GTP is bound by residues 13 to 19 (GDEGKGK) and 41 to 43 (GHT). Asp-14 (proton acceptor) is an active-site residue. Positions 14 and 41 each coordinate Mg(2+). Residues 14 to 17 (DEGK), 39 to 42 (NAGH), Thr-130, Arg-144, Gln-225, Thr-240, and Arg-304 contribute to the IMP site. The Proton donor role is filled by His-42. 300–306 (ATTGRAR) is a binding site for substrate. Residues Arg-306, 332-334 (KLD), and 415-417 (STG) each bind GTP.

The protein belongs to the adenylosuccinate synthetase family. Homodimer. It depends on Mg(2+) as a cofactor.

It localises to the cytoplasm. The catalysed reaction is IMP + L-aspartate + GTP = N(6)-(1,2-dicarboxyethyl)-AMP + GDP + phosphate + 2 H(+). It participates in purine metabolism; AMP biosynthesis via de novo pathway; AMP from IMP: step 1/2. In terms of biological role, plays an important role in the de novo pathway of purine nucleotide biosynthesis. Catalyzes the first committed step in the biosynthesis of AMP from IMP. The chain is Adenylosuccinate synthetase from Ectopseudomonas mendocina (strain ymp) (Pseudomonas mendocina).